Consider the following 3081-residue polypeptide: Cilia- and flagella-associated protein 54 (3081 aa).

9 disordered regions span residues 542 to 579 (SGTA…AGGA), 591 to 626 (TQTA…QSSL), 910 to 942 (PPQP…GARK), 1406 to 1451 (ADAP…GITP), 1518 to 1586 (ESIL…YPVV), 1636 to 1657 (RRAA…EERP), 2176 to 2210 (GERT…LPEP), 2229 to 2306 (MASG…SQRA), and 2776 to 2806 (ARPV…SGDG). Residues 564-579 (GGSASPPNGSSGAGGA) show a composition bias toward low complexity. The span at 1428-1449 (MPPPVPDPSAAGPPPLTPPEGI) shows a compositional bias: pro residues. A compositionally biased stretch (basic and acidic residues) spans 1538–1550 (GGKDDKKKDDKAP). Low complexity-rich tracts occupy residues 1638-1648 (AALAASASTAG), 2181-2199 (APKP…AAAA), and 2240-2269 (EPSS…SPTG). A compositionally biased stretch (pro residues) spans 2289–2301 (PEVPGPPPPPPPS). The segment covering 2776 to 2788 (ARPVATSSSGARP) has biased composition (low complexity). A compositionally biased stretch (gly residues) spans 2796-2805 (KPGAGGGSGD).

The protein belongs to the CFAP54 family. In terms of assembly, part of the PDCP1 complex composed of CFAP46, CFAP54, CFAP74 and CFAP221; the PDCP1 complex binds calmodulin.

The protein localises to the cytoplasm. It localises to the cytoskeleton. It is found in the cilium axoneme. The polypeptide is Cilia- and flagella-associated protein 54 (Chlamydomonas reinhardtii (Chlamydomonas smithii)).